We begin with the raw amino-acid sequence, 530 residues long: Inactive ubiquitin carboxyl-terminal hydrolase 17-like protein 4 (530 aa).

In terms of domain architecture, USP spans 80-375; the sequence is AGLQNMGNTC…QAYVLFYIQK (296 aa). A compositionally biased stretch (basic and acidic residues) spans 382–392; it reads SESVSRGREPR. Disordered regions lie at residues 382 to 410 and 493 to 530; these read SESV…ELKR and NSTD…LVCQ. Residues 495 to 510 are compositionally biased toward polar residues; the sequence is TDQESMNTGTLASLQG. Residues 511–524 show a composition bias toward basic residues; that stretch reads RTRRSKGKNKHSKR.

This sequence belongs to the peptidase C19 family. USP17 subfamily.

The protein localises to the nucleus. It is found in the endoplasmic reticulum. This chain is Inactive ubiquitin carboxyl-terminal hydrolase 17-like protein 4 (USP17L4), found in Homo sapiens (Human).